The chain runs to 697 residues: Potassium-transporting ATPase ATP-binding subunit (697 aa).

The next 4 helical transmembrane spans lie at 36–56 (VMFV…RDLI), 66–86 (LQII…EAVA), 218–238 (IALN…TATI), and 253–273 (VLVA…LSAI). The active-site 4-aspartylphosphate intermediate is aspartate 306. ATP-binding positions include aspartate 343, glutamate 347, 376 to 383 (FTAQTRMS), and lysine 394. Aspartate 526 and aspartate 530 together coordinate Mg(2+). A run of 3 helical transmembrane segments spans residues 595 to 615 (YFAI…QSTG), 631 to 651 (AILS…PLSL), and 669 to 689 (LLVY…IIDM).

It belongs to the cation transport ATPase (P-type) (TC 3.A.3) family. Type IA subfamily. The system is composed of three essential subunits: KdpA, KdpB and KdpC.

Its subcellular location is the cell inner membrane. The enzyme catalyses K(+)(out) + ATP + H2O = K(+)(in) + ADP + phosphate + H(+). In terms of biological role, part of the high-affinity ATP-driven potassium transport (or Kdp) system, which catalyzes the hydrolysis of ATP coupled with the electrogenic transport of potassium into the cytoplasm. This subunit is responsible for energy coupling to the transport system and for the release of the potassium ions to the cytoplasm. This Mesorhizobium japonicum (strain LMG 29417 / CECT 9101 / MAFF 303099) (Mesorhizobium loti (strain MAFF 303099)) protein is Potassium-transporting ATPase ATP-binding subunit.